Consider the following 440-residue polypeptide: Transposon Ty1-GR2 Gag polyprotein (440 aa).

Low complexity predominate over residues 1–16; the sequence is MESQQLSQHSHISHGS. 3 disordered regions span residues 1-93, 126-173, and 352-440; these read MESQ…MMTQ, PQSQ…RPPP, and GSRN…PGTY. Polar residues-rich tracts occupy residues 48–60 and 127–152; these read TKANSQQTTTPAS and QSQFPQYPSSVGTPLSTPSPESGNTF. Low complexity predominate over residues 153 to 165; sequence TDSSSADSDMTST. The segment at 299–401 is RNA-binding; it reads NNGIHINNKV…NSKSKTARAH (103 aa). The span at 402–418 shows a compositional bias: low complexity; the sequence is NVSTSNNSPSTDNDSIS. At S416 the chain carries Phosphoserine. Residues 419 to 428 show a composition bias toward polar residues; the sequence is KSTTEPIQLN. Basic and acidic residues predominate over residues 429–440; it reads NKHDLHLRPGTY.

Homotrimer.

Its subcellular location is the cytoplasm. Capsid protein (CA) is the structural component of the virus-like particle (VLP), forming the shell that encapsulates the retrotransposons dimeric RNA genome. The particles are assembled from trimer-clustered units and there are holes in the capsid shells that allow for the diffusion of macromolecules. CA also has nucleocapsid-like chaperone activity, promoting primer tRNA(i)-Met annealing to the multipartite primer-binding site (PBS), dimerization of Ty1 RNA and initiation of reverse transcription. The polypeptide is Transposon Ty1-GR2 Gag polyprotein (TY1A-GR2) (Saccharomyces cerevisiae (strain ATCC 204508 / S288c) (Baker's yeast)).